The sequence spans 331 residues: Fructose-1,6-bisphosphatase class 1 2 (331 aa).

4 residues coordinate Mg(2+): glutamate 80, aspartate 98, leucine 100, and aspartate 101. Residues 101–104 and asparagine 189 contribute to the substrate site; that span reads DGSS. Glutamate 261 contributes to the Mg(2+) binding site.

This sequence belongs to the FBPase class 1 family. Homotetramer. Mg(2+) is required as a cofactor.

Its subcellular location is the cytoplasm. It carries out the reaction beta-D-fructose 1,6-bisphosphate + H2O = beta-D-fructose 6-phosphate + phosphate. Its pathway is carbohydrate biosynthesis; Calvin cycle. This is Fructose-1,6-bisphosphatase class 1 2 from Cereibacter sphaeroides (strain ATCC 17023 / DSM 158 / JCM 6121 / CCUG 31486 / LMG 2827 / NBRC 12203 / NCIMB 8253 / ATH 2.4.1.) (Rhodobacter sphaeroides).